Consider the following 184-residue polypeptide: Gremlin-1 (184 aa).

The first 24 residues, 1–24 (MNRTAYTVGALLLLLGTLLPAAEG), serve as a signal peptide directing secretion. N2 and N42 each carry an N-linked (GlcNAc...) asparagine glycan. The disordered stretch occupies residues 24 to 78 (GKKKGSQGAIPPPDKAQHNDSEQTQSPPQPGSRTRGRGQGRGTAMPGEEVLESSQ). Cystine bridges form between C94–C144, C108–C158, C118–C176, and C122–C178. Positions 94–184 (CKTQPLKQTI…QCRCISIDLD (91 aa)) constitute a CTCK domain.

It belongs to the DAN family. Homodimer; can also form homooligomers. Interacts with BMP2; can form higher oligomers with BMP2. Interacts with SLIT1 and SLIT2 in a glycosylation-dependent manner. As to expression, highly expressed in the brain, kidney, spleen, and testis and weakly expressed in the lung and liver. Predominantly expressed in differentiated cells as neurons in brain, type I cells in lung and globlet cells in intestine.

The protein resides in the secreted. Cytokine that may play an important role during carcinogenesis and metanephric kidney organogenesis, as a BMP antagonist required for early limb outgrowth and patterning in maintaining the FGF4-SHH feedback loop. Down-regulates the BMP4 signaling in a dose-dependent manner. Antagonist of BMP2; inhibits BMP2-mediated differentiation of osteoblasts (in vitro). Acts as inhibitor of monocyte chemotaxis. Can inhibit the growth or viability of normal cells but not transformed cells when is overexpressed. This chain is Gremlin-1 (Grem1), found in Rattus norvegicus (Rat).